A 360-amino-acid polypeptide reads, in one-letter code: Photosystem II protein D1 2 (360 aa).

The next 3 helical transmembrane spans lie at 29–46, 118–133, and 142–156; these read YVGW…TATT, HFLI…EWEL, and WICV…AATA. Chlorophyll a is bound at residue H118. Y126 provides a ligand contact to pheophytin a. The [CaMn4O5] cluster site is built by D170 and E189. A helical transmembrane segment spans residues 197 to 218; that stretch reads FHMLGVAGVFGGSLFSAMHGSL. A chlorophyll a-binding site is contributed by H198. Residues H215 and 264 to 265 contribute to the a quinone site; that span reads SF. H215 contacts Fe cation. H272 contacts Fe cation. A helical membrane pass occupies residues 274-288; the sequence is FLGAWPVVGIWFTAL. H332, E333, D342, and A344 together coordinate [CaMn4O5] cluster. The propeptide occupies 345–360; the sequence is AGEQAPVALQAPAING.

It belongs to the reaction center PufL/M/PsbA/D family. As to quaternary structure, PSII is composed of 1 copy each of membrane proteins PsbA, PsbB, PsbC, PsbD, PsbE, PsbF, PsbH, PsbI, PsbJ, PsbK, PsbL, PsbM, PsbT, PsbX, PsbY, PsbZ, Psb30/Ycf12, peripheral proteins PsbO, CyanoQ (PsbQ), PsbU, PsbV and a large number of cofactors. It forms dimeric complexes. Requires The D1/D2 heterodimer binds P680, chlorophylls that are the primary electron donor of PSII, and subsequent electron acceptors. It shares a non-heme iron and each subunit binds pheophytin, quinone, additional chlorophylls, carotenoids and lipids. D1 provides most of the ligands for the Mn4-Ca-O5 cluster of the oxygen-evolving complex (OEC). There is also a Cl(-1) ion associated with D1 and D2, which is required for oxygen evolution. The PSII complex binds additional chlorophylls, carotenoids and specific lipids. as cofactor. In terms of processing, tyr-161 forms a radical intermediate that is referred to as redox-active TyrZ, YZ or Y-Z. C-terminally processed by CtpA; processing is essential to allow assembly of the oxygen-evolving complex and thus photosynthetic growth.

It is found in the cellular thylakoid membrane. It catalyses the reaction 2 a plastoquinone + 4 hnu + 2 H2O = 2 a plastoquinol + O2. Functionally, photosystem II (PSII) is a light-driven water:plastoquinone oxidoreductase that uses light energy to abstract electrons from H(2)O, generating O(2) and a proton gradient subsequently used for ATP formation. It consists of a core antenna complex that captures photons, and an electron transfer chain that converts photonic excitation into a charge separation. The D1/D2 (PsbA/PsbD) reaction center heterodimer binds P680, the primary electron donor of PSII as well as several subsequent electron acceptors. This is Photosystem II protein D1 2 from Picosynechococcus sp. (strain ATCC 27264 / PCC 7002 / PR-6) (Agmenellum quadruplicatum).